Consider the following 281-residue polypeptide: Ribosomal RNA small subunit methyltransferase A (281 aa).

S-adenosyl-L-methionine-binding residues include histidine 25, leucine 27, glycine 52, glutamate 74, aspartate 100, and asparagine 119.

Belongs to the class I-like SAM-binding methyltransferase superfamily. rRNA adenine N(6)-methyltransferase family. RsmA subfamily.

Its subcellular location is the cytoplasm. The enzyme catalyses adenosine(1518)/adenosine(1519) in 16S rRNA + 4 S-adenosyl-L-methionine = N(6)-dimethyladenosine(1518)/N(6)-dimethyladenosine(1519) in 16S rRNA + 4 S-adenosyl-L-homocysteine + 4 H(+). Specifically dimethylates two adjacent adenosines (A1518 and A1519) in the loop of a conserved hairpin near the 3'-end of 16S rRNA in the 30S particle. May play a critical role in biogenesis of 30S subunits. This is Ribosomal RNA small subunit methyltransferase A from Paramagnetospirillum magneticum (strain ATCC 700264 / AMB-1) (Magnetospirillum magneticum).